Reading from the N-terminus, the 133-residue chain is Large ribosomal subunit protein bL20 (133 aa).

Belongs to the bacterial ribosomal protein bL20 family.

In terms of biological role, binds directly to 23S ribosomal RNA and is necessary for the in vitro assembly process of the 50S ribosomal subunit. It is not involved in the protein synthesizing functions of that subunit. In Bartonella henselae (strain ATCC 49882 / DSM 28221 / CCUG 30454 / Houston 1) (Rochalimaea henselae), this protein is Large ribosomal subunit protein bL20.